The chain runs to 754 residues: Endothelin-converting enzyme 1 (754 aa).

Residues 1 to 52 (MMSTYKRATLDEEDLVDSLSESDVYPNHLQVNFRGPRNGQRCWAARTPVEKR) lie on the Cytoplasmic side of the membrane. The residue at position 9 (Thr9) is a Phosphothreonine. Residues 53–73 (LVVLVALLAAALVACLAVLGI) form a helical; Signal-anchor for type II membrane protein membrane-spanning segment. Residues 74-754 (QYQTRTPSVC…MNPHHKCEVW (681 aa)) lie on the Extracellular side of the membrane. The Peptidase M13 domain occupies 82–754 (VCLSEACISV…MNPHHKCEVW (673 aa)). Intrachain disulfides connect Cys83/Cys88, Cys106/Cys739, Cys114/Cys699, Cys169/Cys419, and Cys628/Cys751. N-linked (GlcNAc...) asparagine glycans are attached at residues Asn150, Asn171, Asn194, Asn254, Asn300, Asn346, Asn367, and Asn523. Residue His591 participates in Zn(2+) binding. Residue Glu592 is part of the active site. Residue His595 participates in Zn(2+) binding. Residues Asn616 and Asn635 are each glycosylated (N-linked (GlcNAc...) asparagine). A Zn(2+)-binding site is contributed by Glu651. Asp655 serves as the catalytic Proton donor.

It belongs to the peptidase M13 family. As to quaternary structure, homodimer; disulfide-linked. Interacts with PPP1R16B. Interacts with TSPAN8; this interaction recruits the endothelin converting enzyme ECE1 to tetraspanin-enriched microdomains and positively modulates its enzymatic activity. Zn(2+) serves as cofactor.

It localises to the cell membrane. It carries out the reaction Hydrolysis of the 21-Trp-|-Val-22 bond in big endothelin to form endothelin 1.. Inhibited by phosphoramidon. Functionally, converts big endothelin-1 to endothelin-1. The chain is Endothelin-converting enzyme 1 (ECE1) from Bos taurus (Bovine).